Consider the following 64-residue polypeptide: Large ribosomal subunit protein bL35 (64 aa).

This sequence belongs to the bacterial ribosomal protein bL35 family.

This chain is Large ribosomal subunit protein bL35, found in Pseudomonas putida (strain W619).